The primary structure comprises 208 residues: Small ribosomal subunit protein uS4 (208 aa).

The disordered stretch occupies residues 32 to 53 (LNRKRGKNSPGQHGASKVKMSD). Positions 99–161 (LRLDNVVYRL…YKSNVIIKKL (63 aa)) constitute an S4 RNA-binding domain.

Belongs to the universal ribosomal protein uS4 family. In terms of assembly, part of the 30S ribosomal subunit. Contacts protein S5. The interaction surface between S4 and S5 is involved in control of translational fidelity.

Its function is as follows. One of the primary rRNA binding proteins, it binds directly to 16S rRNA where it nucleates assembly of the body of the 30S subunit. Functionally, with S5 and S12 plays an important role in translational accuracy. This chain is Small ribosomal subunit protein uS4, found in Endomicrobium trichonymphae.